Reading from the N-terminus, the 335-residue chain is Tetraacyldisaccharide 4'-kinase (335 aa).

Position 58–65 (58–65) interacts with ATP; it reads TVGGVGKT.

The protein belongs to the LpxK family.

The catalysed reaction is a lipid A disaccharide + ATP = a lipid IVA + ADP + H(+). It participates in glycolipid biosynthesis; lipid IV(A) biosynthesis; lipid IV(A) from (3R)-3-hydroxytetradecanoyl-[acyl-carrier-protein] and UDP-N-acetyl-alpha-D-glucosamine: step 6/6. Functionally, transfers the gamma-phosphate of ATP to the 4'-position of a tetraacyldisaccharide 1-phosphate intermediate (termed DS-1-P) to form tetraacyldisaccharide 1,4'-bis-phosphate (lipid IVA). This chain is Tetraacyldisaccharide 4'-kinase, found in Caulobacter sp. (strain K31).